Consider the following 408-residue polypeptide: Imidazolonepropionase (408 aa).

The Fe(3+) site is built by histidine 74 and histidine 76. Zn(2+) contacts are provided by histidine 74 and histidine 76. 4-imidazolone-5-propanoate-binding residues include arginine 83, tyrosine 146, and histidine 179. Residue tyrosine 146 participates in N-formimidoyl-L-glutamate binding. Residue histidine 244 participates in Fe(3+) binding. Residue histidine 244 coordinates Zn(2+). 4-imidazolone-5-propanoate is bound at residue glutamine 247. A Fe(3+)-binding site is contributed by aspartate 319. Aspartate 319 contacts Zn(2+). N-formimidoyl-L-glutamate is bound by residues asparagine 321 and glycine 323. A 4-imidazolone-5-propanoate-binding site is contributed by threonine 324.

This sequence belongs to the metallo-dependent hydrolases superfamily. HutI family. Zn(2+) is required as a cofactor. It depends on Fe(3+) as a cofactor.

Its subcellular location is the cytoplasm. The enzyme catalyses 4-imidazolone-5-propanoate + H2O = N-formimidoyl-L-glutamate. It functions in the pathway amino-acid degradation; L-histidine degradation into L-glutamate; N-formimidoyl-L-glutamate from L-histidine: step 3/3. Functionally, catalyzes the hydrolytic cleavage of the carbon-nitrogen bond in imidazolone-5-propanoate to yield N-formimidoyl-L-glutamate. It is the third step in the universal histidine degradation pathway. The polypeptide is Imidazolonepropionase (Ralstonia nicotianae (strain ATCC BAA-1114 / GMI1000) (Ralstonia solanacearum)).